A 715-amino-acid polypeptide reads, in one-letter code: Ribosomal RNA large subunit methyltransferase K/L (715 aa).

The THUMP domain occupies 43–154 (TQYRALLWSR…RDDLVLSLDL (112 aa)).

This sequence belongs to the methyltransferase superfamily. RlmKL family.

Its subcellular location is the cytoplasm. The catalysed reaction is guanosine(2445) in 23S rRNA + S-adenosyl-L-methionine = N(2)-methylguanosine(2445) in 23S rRNA + S-adenosyl-L-homocysteine + H(+). It catalyses the reaction guanosine(2069) in 23S rRNA + S-adenosyl-L-methionine = N(2)-methylguanosine(2069) in 23S rRNA + S-adenosyl-L-homocysteine + H(+). Its function is as follows. Specifically methylates the guanine in position 2445 (m2G2445) and the guanine in position 2069 (m7G2069) of 23S rRNA. This is Ribosomal RNA large subunit methyltransferase K/L from Mannheimia succiniciproducens (strain KCTC 0769BP / MBEL55E).